Reading from the N-terminus, the 258-residue chain is Phosphate import ATP-binding protein PstB (258 aa).

An ABC transporter domain is found at 5 to 247 (IDVSGLTAYY…ERIFSNPSVQ (243 aa)). Position 37-44 (37-44 (GPSGCGKS)) interacts with ATP.

Belongs to the ABC transporter superfamily. Phosphate importer (TC 3.A.1.7) family. As to quaternary structure, the complex is composed of two ATP-binding proteins (PstB), two transmembrane proteins (PstC and PstA) and a solute-binding protein (PstS).

Its subcellular location is the cell membrane. It catalyses the reaction phosphate(out) + ATP + H2O = ADP + 2 phosphate(in) + H(+). Its function is as follows. Part of the ABC transporter complex PstSACB involved in phosphate import. Responsible for energy coupling to the transport system. The chain is Phosphate import ATP-binding protein PstB from Streptomyces avermitilis (strain ATCC 31267 / DSM 46492 / JCM 5070 / NBRC 14893 / NCIMB 12804 / NRRL 8165 / MA-4680).